We begin with the raw amino-acid sequence, 783 residues long: LPS-assembly protein LptD (783 aa).

The N-terminal stretch at 1-24 is a signal peptide; the sequence is MKKNYYSLISFSIFTALYSTAGFA.

It belongs to the LptD family. Component of the lipopolysaccharide transport and assembly complex. Interacts with LptE and LptA.

The protein localises to the cell outer membrane. In terms of biological role, together with LptE, is involved in the assembly of lipopolysaccharide (LPS) at the surface of the outer membrane. This is LPS-assembly protein LptD from Mannheimia succiniciproducens (strain KCTC 0769BP / MBEL55E).